Reading from the N-terminus, the 322-residue chain is Methionyl-tRNA formyltransferase (322 aa).

Residue 113–116 (SLLP) coordinates (6S)-5,6,7,8-tetrahydrofolate.

The protein belongs to the Fmt family.

The catalysed reaction is L-methionyl-tRNA(fMet) + (6R)-10-formyltetrahydrofolate = N-formyl-L-methionyl-tRNA(fMet) + (6S)-5,6,7,8-tetrahydrofolate + H(+). Its function is as follows. Attaches a formyl group to the free amino group of methionyl-tRNA(fMet). The formyl group appears to play a dual role in the initiator identity of N-formylmethionyl-tRNA by promoting its recognition by IF2 and preventing the misappropriation of this tRNA by the elongation apparatus. In Bacteroides thetaiotaomicron (strain ATCC 29148 / DSM 2079 / JCM 5827 / CCUG 10774 / NCTC 10582 / VPI-5482 / E50), this protein is Methionyl-tRNA formyltransferase.